Here is a 318-residue protein sequence, read N- to C-terminus: Aspartate carbamoyltransferase catalytic subunit (318 aa).

Residues arginine 67 and threonine 68 each coordinate carbamoyl phosphate. Lysine 95 lines the L-aspartate pocket. Residues arginine 117, histidine 145, and glutamine 148 each coordinate carbamoyl phosphate. The L-aspartate site is built by arginine 178 and arginine 236. Carbamoyl phosphate-binding residues include glycine 277 and proline 278.

This sequence belongs to the aspartate/ornithine carbamoyltransferase superfamily. ATCase family. Heterododecamer (2C3:3R2) of six catalytic PyrB chains organized as two trimers (C3), and six regulatory PyrI chains organized as three dimers (R2).

The enzyme catalyses carbamoyl phosphate + L-aspartate = N-carbamoyl-L-aspartate + phosphate + H(+). Its pathway is pyrimidine metabolism; UMP biosynthesis via de novo pathway; (S)-dihydroorotate from bicarbonate: step 2/3. Catalyzes the condensation of carbamoyl phosphate and aspartate to form carbamoyl aspartate and inorganic phosphate, the committed step in the de novo pyrimidine nucleotide biosynthesis pathway. The protein is Aspartate carbamoyltransferase catalytic subunit of Roseiflexus sp. (strain RS-1).